The following is a 259-amino-acid chain: O-antigen export system permease protein RfbA (259 aa).

6 consecutive transmembrane segments (helical) span residues 33–53 (LGYL…YFIF), 73–95 (FPWQ…NAQI), 111–131 (VMME…FLFV), 142–162 (WGIP…SIIF), 176–196 (VSLG…SDMI), and 228–248 (EYIS…LSIF). Positions 33 to 251 (LGYLWSVANP…VVGLSIFNKL (219 aa)) constitute an ABC transmembrane type-2 domain.

The protein belongs to the ABC-2 integral membrane protein family.

It is found in the cell inner membrane. In terms of biological role, may form an ATP-driven O-antigen export apparatus, in association with RfbB. The chain is O-antigen export system permease protein RfbA (rfbA) from Klebsiella pneumoniae.